The following is a 135-amino-acid chain: ATP synthase epsilon chain (135 aa).

A disordered region spans residues 84–107 (SLSEEKQSEEQKQRLERAKKALSS). The segment covering 86–102 (SEEKQSEEQKQRLERAK) has biased composition (basic and acidic residues).

It belongs to the ATPase epsilon chain family. As to quaternary structure, F-type ATPases have 2 components, CF(1) - the catalytic core - and CF(0) - the membrane proton channel. CF(1) has five subunits: alpha(3), beta(3), gamma(1), delta(1), epsilon(1). CF(0) has three main subunits: a, b and c.

It localises to the cell membrane. Its function is as follows. Produces ATP from ADP in the presence of a proton gradient across the membrane. The polypeptide is ATP synthase epsilon chain (Elusimicrobium minutum (strain Pei191)).